The chain runs to 155 residues: Ribonuclease H (155 aa).

The 146-residue stretch at methionine 1–alanine 146 folds into the RNase H type-1 domain. The Mg(2+) site is built by aspartate 9, glutamate 52, aspartate 74, and aspartate 138.

Belongs to the RNase H family. In terms of assembly, monomer. Requires Mg(2+) as cofactor.

It is found in the cytoplasm. It catalyses the reaction Endonucleolytic cleavage to 5'-phosphomonoester.. Its function is as follows. Endonuclease that specifically degrades the RNA of RNA-DNA hybrids. This chain is Ribonuclease H, found in Paracoccus denitrificans (strain Pd 1222).